Reading from the N-terminus, the 157-residue chain is Protein Smg homolog (157 aa).

This sequence belongs to the Smg family.

The chain is Protein Smg homolog from Aliivibrio salmonicida (strain LFI1238) (Vibrio salmonicida (strain LFI1238)).